The primary structure comprises 547 residues: Riboflavin transporter RibJ (547 aa).

The Cytoplasmic portion of the chain corresponds to Met-1–Asp-11. Residues His-12–Ile-32 form a helical membrane-spanning segment. Residues Asp-33–Ser-58 lie on the Extracellular side of the membrane. A helical membrane pass occupies residues Leu-59 to Val-79. The Cytoplasmic portion of the chain corresponds to Asp-80–Arg-85. Residues Phe-86–Ala-106 traverse the membrane as a helical segment. Topologically, residues Ala-107–Asn-108 are extracellular. Residues Ile-109 to Ser-129 traverse the membrane as a helical segment. The Cytoplasmic portion of the chain corresponds to Pro-130–Gly-144. A helical transmembrane segment spans residues Leu-145 to Ala-165. At Gly-166–Arg-175 the chain is on the extracellular side. A helical transmembrane segment spans residues Lys-176 to Ala-196. Topologically, residues Arg-197–Phe-344 are cytoplasmic. The disordered stretch occupies residues Arg-198 to Gln-293. Residues Asn-244–Arg-255 are compositionally biased toward basic and acidic residues. A helical membrane pass occupies residues Leu-345–Ile-365. The Extracellular portion of the chain corresponds to Ser-366–Ala-386. The chain crosses the membrane as a helical span at residues Ala-387–Leu-407. The Cytoplasmic segment spans residues Ala-408–Thr-412. A helical transmembrane segment spans residues Ala-413–Leu-433. The Extracellular segment spans residues Gly-434–Tyr-437. The chain crosses the membrane as a helical span at residues Val-438–Met-458. The Cytoplasmic segment spans residues Pro-459 to Asn-470. Residues Leu-471–Pro-491 traverse the membrane as a helical segment. Over Met-492 to Ala-505 the chain is Extracellular. The N-linked (GlcNAc...) asparagine glycan is linked to Asn-501. The helical transmembrane segment at Phe-506–Leu-526 threads the bilayer. At Trp-527–Met-547 the chain is on the cytoplasmic side.

The protein belongs to the major facilitator superfamily. RibJ family.

The protein resides in the cell membrane. Functionally, transporter involved in riboflavin (vitamin B2) uptake. Also transports FMN and FAD. This is Riboflavin transporter RibJ from Trypanosoma brucei brucei (strain 927/4 GUTat10.1).